A 363-amino-acid chain; its full sequence is Chorismate synthase (363 aa).

Arg48 contacts NADP(+). Residues 125-127 (RSS), 238-239 (NA), Gly278, 293-297 (KPTAS), and Arg319 contribute to the FMN site.

This sequence belongs to the chorismate synthase family. In terms of assembly, homotetramer. Requires FMNH2 as cofactor.

The enzyme catalyses 5-O-(1-carboxyvinyl)-3-phosphoshikimate = chorismate + phosphate. Its pathway is metabolic intermediate biosynthesis; chorismate biosynthesis; chorismate from D-erythrose 4-phosphate and phosphoenolpyruvate: step 7/7. In terms of biological role, catalyzes the anti-1,4-elimination of the C-3 phosphate and the C-6 proR hydrogen from 5-enolpyruvylshikimate-3-phosphate (EPSP) to yield chorismate, which is the branch point compound that serves as the starting substrate for the three terminal pathways of aromatic amino acid biosynthesis. This reaction introduces a second double bond into the aromatic ring system. The sequence is that of Chorismate synthase from Acinetobacter baumannii (strain AB0057).